A 251-amino-acid chain; its full sequence is Hydroxyacylglutathione hydrolase GloB (251 aa).

Positions 53, 55, 57, 58, 110, and 127 each coordinate Zn(2+). Residues arginine 136 to phenylalanine 138, histidine 165 to tyrosine 167, and arginine 245 to lysine 248 each bind substrate. Histidine 165 lines the Zn(2+) pocket.

Belongs to the metallo-beta-lactamase superfamily. Glyoxalase II family. Monomer. It depends on Zn(2+) as a cofactor.

It carries out the reaction an S-(2-hydroxyacyl)glutathione + H2O = a 2-hydroxy carboxylate + glutathione + H(+). The catalysed reaction is (R)-S-lactoylglutathione + H2O = (R)-lactate + glutathione + H(+). It functions in the pathway secondary metabolite metabolism; methylglyoxal degradation; (R)-lactate from methylglyoxal: step 2/2. Is inhibited by Cu(2+). Functionally, type II glyoxalase that catalyzes the hydrolysis of (R)-S-lactoylglutathione to (R)-lactate and glutathione. Is more efficient than the isozyme GloC, and plays a major contribution to methylglyoxal (MG) detoxification in E.coli. The two isoenzymes have additive effects and ensure maximal MG degradation. This is Hydroxyacylglutathione hydrolase GloB from Escherichia coli (strain K12).